Consider the following 299-residue polypeptide: MSTFSASDFNSERYSSSRPSYPSDFYKMIDEYHDGERKLLVDVGCGPGTATLQMAQELKPFEQIIGSDLSATMIKTAEVIKEGSPDTYKNVSFKISSSDDFKFLGADSVDKQKIDMITAVECAHWFDFEKFQRSAYANLRKDGTIAIWGYADPIFPDYPEFDDLMIEVPYGKQGLGPYWEQPGRSRLRNMLKDSHLDPELFHDIQVSYFCAEDVRDKVKLHQHTKKPLLIRKQVTLVEFADYVRTWSAYHQWKQDPKNKDKEDVADWFIKESLRRRPELSTNTKIEVVWNTFYKLGKRV.

At serine 2 the chain carries N-acetylserine.

It belongs to the methyltransferase superfamily. Tam family.

The protein resides in the cytoplasm. The enzyme catalyses trans-aconitate + S-adenosyl-L-methionine = (E)-2-(methoxycarbonylmethyl)but-2-enedioate + S-adenosyl-L-homocysteine. In terms of biological role, catalyzes the S-adenosylmethionine monomethyl esterification of trans-aconitate and 3-isopropylmalate at high affinity and of other molecules like cis-aconitate, isocitrate, and citrate at lower velocities and affinities. The function of trans-aconitate methylation appears to be in reducing the toxicity of this spontaneous breakdown product of cis-aconitate. The role of 3-isopropylmalate methylation is unclear but may represent a metabolic branch at 3-isopropylmalate, where some of the material is taken in the pathway leading to leucine and some is taken in a pathway to the 3-isopropylmalate methyl ester, a molecule that provides a signal to switch from vegetative to invasive growth in response to amino acid starvation. This chain is Trans-aconitate 3-methyltransferase (TMT1), found in Saccharomyces cerevisiae (strain ATCC 204508 / S288c) (Baker's yeast).